The chain runs to 2110 residues: Protein Ycf2 (2110 aa).

Residue 1336-1343 (GSIGTGRS) participates in ATP binding. Residues 1852–1876 (EEEAELQDEEAELQDEGAGRKDEEA) are disordered. Over residues 1854–1866 (EAELQDEEAELQD) the composition is skewed to acidic residues.

Belongs to the Ycf2 family.

Its subcellular location is the plastid. It localises to the chloroplast stroma. In terms of biological role, probable ATPase of unknown function. Its presence in a non-photosynthetic plant (Epifagus virginiana) and experiments in tobacco indicate that it has an essential function which is probably not related to photosynthesis. This Pelargonium hortorum (Common geranium) protein is Protein Ycf2 (ycf2-A).